The sequence spans 92 residues: Small ribosomal subunit protein uS19 (92 aa).

This sequence belongs to the universal ribosomal protein uS19 family.

In terms of biological role, protein S19 forms a complex with S13 that binds strongly to the 16S ribosomal RNA. This chain is Small ribosomal subunit protein uS19, found in Enterococcus faecalis (strain ATCC 700802 / V583).